Here is a 302-residue protein sequence, read N- to C-terminus: Aspartate carbamoyltransferase catalytic subunit (302 aa).

Residues Arg-53 and Thr-54 each contribute to the carbamoyl phosphate site. An L-aspartate-binding site is contributed by Lys-82. Positions 103, 131, and 134 each coordinate carbamoyl phosphate. L-aspartate-binding residues include Arg-164 and Arg-223. Carbamoyl phosphate is bound by residues Leu-260 and Pro-261.

Belongs to the aspartate/ornithine carbamoyltransferase superfamily. ATCase family. As to quaternary structure, heterooligomer of catalytic and regulatory chains.

It catalyses the reaction carbamoyl phosphate + L-aspartate = N-carbamoyl-L-aspartate + phosphate + H(+). Its pathway is pyrimidine metabolism; UMP biosynthesis via de novo pathway; (S)-dihydroorotate from bicarbonate: step 2/3. In terms of biological role, catalyzes the condensation of carbamoyl phosphate and aspartate to form carbamoyl aspartate and inorganic phosphate, the committed step in the de novo pyrimidine nucleotide biosynthesis pathway. The chain is Aspartate carbamoyltransferase catalytic subunit from Methanococcus maripaludis (strain C5 / ATCC BAA-1333).